We begin with the raw amino-acid sequence, 218 residues long: Glycerol-3-phosphate acyltransferase (218 aa).

A run of 6 helical transmembrane segments spans residues 3 to 23, 53 to 73, 82 to 102, 112 to 132, 142 to 162, and 166 to 186; these read FAIF…YWIA, GFPV…LSGI, FQLA…FLGF, LGVF…VFLV, IGSI…SILL, and EVSY…ILTH.

Belongs to the PlsY family. In terms of assembly, probably interacts with PlsX.

Its subcellular location is the cell inner membrane. It carries out the reaction an acyl phosphate + sn-glycerol 3-phosphate = a 1-acyl-sn-glycero-3-phosphate + phosphate. Its pathway is lipid metabolism; phospholipid metabolism. In terms of biological role, catalyzes the transfer of an acyl group from acyl-phosphate (acyl-PO(4)) to glycerol-3-phosphate (G3P) to form lysophosphatidic acid (LPA). This enzyme utilizes acyl-phosphate as fatty acyl donor, but not acyl-CoA or acyl-ACP. In Leptospira borgpetersenii serovar Hardjo-bovis (strain JB197), this protein is Glycerol-3-phosphate acyltransferase.